The primary structure comprises 110 residues: Serum amyloid A protein (110 aa).

Residues 73–110 (GGSGRGAEDSRADQAANEWGRSGKDPNHFRPHGLPDKY) form a disordered region. Residues 93 to 110 (RSGKDPNHFRPHGLPDKY) show a composition bias toward basic and acidic residues.

It belongs to the SAA family. Post-translationally, this protein is the precursor of amyloid protein A, which is formed by the removal of residues from the C-terminal end. As to expression, expressed by the liver; secreted in plasma.

Its function is as follows. Major acute phase reactant. Apolipoprotein of the HDL complex. The polypeptide is Serum amyloid A protein (SAA1) (Equus caballus (Horse)).